Here is a 551-residue protein sequence, read N- to C-terminus: Interferon-induced, double-stranded RNA-activated protein kinase (551 aa).

N-acetylalanine is present on Ala-2. The (Microbial infection) Interaction with HCV NS5A stretch occupies residues 2-180 (AGDLSAGFFM…SVKSDYLSSG (179 aa)). Residues 9–77 (FFMEELNTYR…AKLAVEILNK (69 aa)) form the DRBM 1 domain. Residue Lys-69 forms a Glycyl lysine isopeptide (Lys-Gly) (interchain with G-Cter in ISG15) linkage. A Phosphoserine modification is found at Ser-83. Phosphothreonine; by autocatalysis is present on residues Thr-88, Thr-89, and Thr-90. A DRBM 2 domain is found at 100–167 (NYIGLINRIA…AKLAYLQILS (68 aa)). Position 101 is a phosphotyrosine; by autocatalysis (Tyr-101). A Glycyl lysine isopeptide (Lys-Gly) (interchain with G-Cter in ISG15) cross-link involves residue Lys-159. At Tyr-162 the chain carries Phosphotyrosine; by autocatalysis. Positions 202–215 (SSSEGDFSADTSEI) are enriched in polar residues. Positions 202 to 222 (SSSEGDFSADTSEINSNSDSL) are disordered. Ser-242 is modified (phosphoserine; by autocatalysis). A phosphothreonine; by autocatalysis mark is found at Thr-255 and Thr-258. A dimerization region spans residues 266 to 362 (DFKEIELIGS…NSSRSKTKCL (97 aa)). The interaction with TRAF5 stretch occupies residues 266–551 (DFKEIELIGS…SPEKNERHTC (286 aa)). Positions 267 to 538 (FKEIELIGSG…TSEILRTLTV (272 aa)) constitute a Protein kinase domain. 273–281 (IGSGGFGQV) lines the ATP pocket. Tyr-293 bears the Phosphotyrosine; by autocatalysis mark. ATP is bound at residue Lys-296. 2 repeat units span residues 331–343 (DYDPETSDDSLES) and 345–357 (DYDPENSKNSSRS). The interval 331 to 357 (DYDPETSDDSLESSDYDPENSKNSSRS) is 2 X 13 AA approximate repeats. The interval 379–496 (EKRRGEKLDK…TAFETSKFFT (118 aa)) is interaction with EIF2S1/EIF-2ALPHA. The active-site Proton acceptor is the Asp-414. Asp-432 is a binding site for Mg(2+). Thr-446 and Thr-451 each carry phosphothreonine; by autocatalysis. Ser-456 and Ser-542 each carry phosphoserine.

This sequence belongs to the protein kinase superfamily. Ser/Thr protein kinase family. GCN2 subfamily. As to quaternary structure, homodimer. Interacts with STRBP. Interacts with DNAJC3. Forms a complex with FANCA, FANCC, FANCG and HSP70. Interacts with ADAR/ADAR1. Interacts with IRS1. The inactive form interacts with NCK1 and GSN. Interacts (via the kinase catalytic domain) with STAT3 (via SH2 domain), TRAF2 (C-terminus), TRAF5 (C-terminus) and TRAF6 (C-terminus). Interacts with MAP2K6, IKBKB/IKKB, NPM1, TARBP2, NLRP1, NLRP3, NLRC4 and AIM2. Interacts (via DRBM 1 domain) with DUS2L (via DRBM domain). Interacts with DHX9 (via N-terminus) and this interaction is dependent upon activation of the kinase. Interacts with EIF2S1/EIF-2ALPHA; this interaction induces a conformational change in EIF2S1 and its phosphorylation by EIF2AK2. In terms of assembly, (Microbial infection) Interacts with human cytomegalovirus (HCMV) TRS1; this interaction retains EIF2AK2 to the nucleus and prevents its activation. (Microbial infection) Interacts with vaccinia virus protein K3 (K3L); this interaction inhibits EIF2AK2. As to quaternary structure, (Microbial infection) Interacts with human herpes simplex virus 1 (HHV-1) protein US11 in an RNA-dependent manner. In terms of assembly, (Microbial infection) The inactive form interacts with Toscana virus (TOS) NSS. (Microbial infection) Interacts with herpes virus 8 protein v-IRF2; this interaction inhibits EIF2AK2 activation. As to quaternary structure, (Microbial infection) Interacts with vaccinia protein E3. In terms of assembly, (Microbial infection) Interacts (via N-terminus) with Hepatitis C virus (HCV) mature core protein (via N-terminus); this interaction induces the autophosphorylation of EIF2AK2. (Microbial infection) Interacts with Hepatitis C virus (HCV) non-structural protein 5A (NS5A); this interaction leads to disruption of EIF2AK2 dimerization by NS5A. As to quaternary structure, (Microbial infection) Interacts with Hepatitis C virus (HCV) envelope glycoprotein E2; this interaction inhibits EIF2AK2 and blocks its inhibitory effect on protein synthesis and cell growth. In terms of assembly, (Microbial infection) Interacts with human respiratory syncytial virus (HRSV) nucleoprotein; this interaction inhibits EIF2AK2 phosphorylation of EIF2S1 and blocks EIF2AK2-mediated translation shutoff. (Microbial infection) Interacts with human herpesvirus 8 protein MTA/ORF57; this interaction inhibits stress granule formation. The cofactor is Mg(2+). Post-translationally, autophosphorylated on several Ser, Thr and Tyr residues. Autophosphorylation of Thr-451 is dependent on Thr-446 and is stimulated by dsRNA binding and dimerization. Autophosphorylation apparently leads to the activation of the kinase. Tyrosine autophosphorylation is essential for efficient dsRNA-binding, dimerization, and kinase activation. As to expression, highly expressed in thymus, spleen and bone marrow compared to non-hematopoietic tissues such as small intestine, liver, or kidney tissues. Colocalizes with GSK3B and TAU in the Alzheimer disease (AD) brain. Elevated levels seen in breast and colon carcinomas, and which correlates with tumor progression and invasiveness or risk of progression.

The protein resides in the cytoplasm. It is found in the nucleus. The protein localises to the perinuclear region. It catalyses the reaction L-seryl-[protein] + ATP = O-phospho-L-seryl-[protein] + ADP + H(+). The catalysed reaction is L-threonyl-[protein] + ATP = O-phospho-L-threonyl-[protein] + ADP + H(+). It carries out the reaction L-tyrosyl-[protein] + ATP = O-phospho-L-tyrosyl-[protein] + ADP + H(+). Initially produced in an inactive form and is activated by binding to viral dsRNA, which causes dimerization and autophosphorylation in the activation loop and stimulation of function. ISGylation can activate it in the absence of viral infection. Can also be activated by heparin, pro-inflammatory stimuli, growth factors, cytokines, oxidative stress and the cellular protein PRKRA. Activity is markedly stimulated by manganese ions. Activation is blocked by the viral components HIV-1 Tat protein and large amounts of HIV-1 trans-activation response (TAR) RNA element as well as by the cellular proteins TARBP2, DUS2L, NPM1, NCK1 and ADAR. Down-regulated by Toscana virus (TOS) and Rift valley fever virus (RVFV) NSS which promote its proteasomal degradation. Inhibited by vaccinia virus protein E3, probably via dsRNA sequestering. Its function is as follows. IFN-induced dsRNA-dependent serine/threonine-protein kinase that phosphorylates the alpha subunit of eukaryotic translation initiation factor 2 (EIF2S1/eIF-2-alpha) and plays a key role in the innate immune response to viral infection. Inhibits viral replication via the integrated stress response (ISR): EIF2S1/eIF-2-alpha phosphorylation in response to viral infection converts EIF2S1/eIF-2-alpha in a global protein synthesis inhibitor, resulting to a shutdown of cellular and viral protein synthesis, while concomitantly initiating the preferential translation of ISR-specific mRNAs, such as the transcriptional activator ATF4. Exerts its antiviral activity on a wide range of DNA and RNA viruses including hepatitis C virus (HCV), hepatitis B virus (HBV), measles virus (MV) and herpes simplex virus 1 (HHV-1). Also involved in the regulation of signal transduction, apoptosis, cell proliferation and differentiation: phosphorylates other substrates including p53/TP53, PPP2R5A, DHX9, ILF3, IRS1 and the HHV-1 viral protein US11. In addition to serine/threonine-protein kinase activity, also has tyrosine-protein kinase activity and phosphorylates CDK1 at 'Tyr-4' upon DNA damage, facilitating its ubiquitination and proteasomal degradation. Either as an adapter protein and/or via its kinase activity, can regulate various signaling pathways (p38 MAP kinase, NF-kappa-B and insulin signaling pathways) and transcription factors (JUN, STAT1, STAT3, IRF1, ATF3) involved in the expression of genes encoding pro-inflammatory cytokines and IFNs. Activates the NF-kappa-B pathway via interaction with IKBKB and TRAF family of proteins and activates the p38 MAP kinase pathway via interaction with MAP2K6. Can act as both a positive and negative regulator of the insulin signaling pathway (ISP). Negatively regulates ISP by inducing the inhibitory phosphorylation of insulin receptor substrate 1 (IRS1) at 'Ser-312' and positively regulates ISP via phosphorylation of PPP2R5A which activates FOXO1, which in turn up-regulates the expression of insulin receptor substrate 2 (IRS2). Can regulate NLRP3 inflammasome assembly and the activation of NLRP3, NLRP1, AIM2 and NLRC4 inflammasomes. Plays a role in the regulation of the cytoskeleton by binding to gelsolin (GSN), sequestering the protein in an inactive conformation away from actin. The protein is Interferon-induced, double-stranded RNA-activated protein kinase (EIF2AK2) of Homo sapiens (Human).